The chain runs to 288 residues: UAP56-interacting factor (288 aa).

The UAP56-binding motif signature appears at 11–29 (TIDKIDMSLDDIIKLNKQE). The segment at 183 to 202 (DLPELSKTPPWRTSVSSGGS) is disordered.

It belongs to the UIF family.

It is found in the nucleus. The protein localises to the nucleoplasm. The protein resides in the nucleus speckle. Required for mRNA export from the nucleus to the cytoplasm. Acts as an adapter that uses the ddx39b/uap56-nfx1 pathway to ensure efficient mRNA export and delivering to the nuclear pore. In Xenopus laevis (African clawed frog), this protein is UAP56-interacting factor (fyttd1).